A 563-amino-acid polypeptide reads, in one-letter code: Delta-1-pyrroline-5-carboxylate dehydrogenase, mitochondrial (563 aa).

A mitochondrion-targeting transit peptide spans 1–23 (MLPPALLRRSLLSYAWRGSGLRW). Lys30 carries the post-translational modification N6-succinyllysine. Position 43 is a phosphoserine (Ser43). Lys51 carries the N6-acetyllysine modification. 5 positions are modified to N6-acetyllysine; alternate: Lys92, Lys98, Lys113, Lys129, and Lys174. N6-succinyllysine; alternate occurs at positions 92, 98, 113, 129, and 174. Residues Ser207, Lys232, and 285-289 (GSVPT) each bind NAD(+). Residue Glu313 is the Proton acceptor of the active site. At Lys317 the chain carries N6-acetyllysine. An N6-succinyllysine modification is found at Lys346. Cys347 functions as the Nucleophile in the catalytic mechanism. Residues Lys364 and Lys375 each carry the N6-acetyllysine modification. An N6-succinyllysine modification is found at Lys394. Glu446 serves as a coordination point for NAD(+). N6-acetyllysine is present on Lys461. The residue at position 508 (Lys508) is an N6-acetyllysine; alternate. Lys508 is modified (N6-succinyllysine; alternate). Residue Ser512 participates in substrate binding.

The protein belongs to the aldehyde dehydrogenase family. Homodimer.

The protein resides in the mitochondrion matrix. It catalyses the reaction L-glutamate 5-semialdehyde + NAD(+) + H2O = L-glutamate + NADH + 2 H(+). Its pathway is amino-acid degradation; L-proline degradation into L-glutamate; L-glutamate from L-proline: step 2/2. Its function is as follows. Irreversible conversion of delta-1-pyrroline-5-carboxylate (P5C), derived either from proline or ornithine, to glutamate. This is a necessary step in the pathway interconnecting the urea and tricarboxylic acid cycles. The preferred substrate is glutamic gamma-semialdehyde, other substrates include succinic, glutaric and adipic semialdehydes. The chain is Delta-1-pyrroline-5-carboxylate dehydrogenase, mitochondrial (Aldh4a1) from Rattus norvegicus (Rat).